Here is a 66-residue protein sequence, read N- to C-terminus: Phylloseptin-H9 (66 aa).

The N-terminal stretch at 1–22 (MAFLKKSLFLVLFLGLVSLSIC) is a signal peptide. The propeptide occupies 23-44 (EEEKRETEEEENDQEEDDKSEE). A disordered region spans residues 24 to 44 (EEKRETEEEENDQEEDDKSEE). Residues 30 to 41 (EEEENDQEEDDK) are compositionally biased toward acidic residues. Leu65 is modified (leucine amide).

Expressed by the skin glands.

It localises to the secreted. Its function is as follows. Has antimicrobial activity. In Pithecopus hypochondrialis (Orange-legged leaf frog), this protein is Phylloseptin-H9.